Consider the following 412-residue polypeptide: Allantoate amidohydrolase (412 aa).

His84, Asp95, Glu130, and His193 together coordinate Zn(2+). Allantoate contacts are provided by Arg218, Asn278, and Arg291. His385 is a binding site for Zn(2+).

This sequence belongs to the peptidase M20 family. Homodimer. Zn(2+) serves as cofactor.

The protein resides in the cytoplasm. It carries out the reaction allantoate + H2O + 2 H(+) = (S)-2-ureidoglycine + NH4(+) + CO2. It functions in the pathway nitrogen metabolism; (S)-allantoin degradation. Its function is as follows. Involved in the anaerobic nitrogen utilization via the assimilation of allantoin. Catalyzes specifically the hydrolysis of allantoate to yield CO2, NH3 and S-ureidoglycine, which is unstable and readily undergoes a second deamination by S-ureidoglycine aminohydrolase AllE to yield S-ureidoglycolate and NH3. This Bacillus subtilis (strain 168) protein is Allantoate amidohydrolase.